Reading from the N-terminus, the 122-residue chain is Large ribosomal subunit protein uL14 (122 aa).

This sequence belongs to the universal ribosomal protein uL14 family. Part of the 50S ribosomal subunit. Forms a cluster with proteins L3 and L19. In the 70S ribosome, L14 and L19 interact and together make contacts with the 16S rRNA in bridges B5 and B8.

Functionally, binds to 23S rRNA. Forms part of two intersubunit bridges in the 70S ribosome. The chain is Large ribosomal subunit protein uL14 from Novosphingobium aromaticivorans (strain ATCC 700278 / DSM 12444 / CCUG 56034 / CIP 105152 / NBRC 16084 / F199).